The following is a 295-amino-acid chain: Acetylglutamate kinase (295 aa).

Substrate is bound by residues 64 to 65 (GG), Arg-86, and Asn-190.

It belongs to the acetylglutamate kinase family. ArgB subfamily.

It is found in the cytoplasm. It catalyses the reaction N-acetyl-L-glutamate + ATP = N-acetyl-L-glutamyl 5-phosphate + ADP. It participates in amino-acid biosynthesis; L-arginine biosynthesis; N(2)-acetyl-L-ornithine from L-glutamate: step 2/4. Its function is as follows. Catalyzes the ATP-dependent phosphorylation of N-acetyl-L-glutamate. The sequence is that of Acetylglutamate kinase from Pelotomaculum thermopropionicum (strain DSM 13744 / JCM 10971 / SI).